A 361-amino-acid chain; its full sequence is tRNA N6-adenosine threonylcarbamoyltransferase (361 aa).

The Fe cation site is built by histidine 110 and histidine 114. Substrate contacts are provided by residues 132 to 136, aspartate 165, glycine 178, aspartate 182, and asparagine 289; that span reads LVSGG. Residue aspartate 317 coordinates Fe cation.

The protein belongs to the KAE1 / TsaD family. Fe(2+) serves as cofactor.

It is found in the cytoplasm. The enzyme catalyses L-threonylcarbamoyladenylate + adenosine(37) in tRNA = N(6)-L-threonylcarbamoyladenosine(37) in tRNA + AMP + H(+). In terms of biological role, required for the formation of a threonylcarbamoyl group on adenosine at position 37 (t(6)A37) in tRNAs that read codons beginning with adenine. Is involved in the transfer of the threonylcarbamoyl moiety of threonylcarbamoyl-AMP (TC-AMP) to the N6 group of A37, together with TsaE and TsaB. TsaD likely plays a direct catalytic role in this reaction. The chain is tRNA N6-adenosine threonylcarbamoyltransferase from Nitratidesulfovibrio vulgaris (strain ATCC 29579 / DSM 644 / CCUG 34227 / NCIMB 8303 / VKM B-1760 / Hildenborough) (Desulfovibrio vulgaris).